Here is a 265-residue protein sequence, read N- to C-terminus: Isoprenyl transferase (265 aa).

D35 is an active-site residue. D35 provides a ligand contact to Mg(2+). Residues 36-39 (GNGR), W40, R48, H52, and 80-82 (SIE) contribute to the substrate site. The active-site Proton acceptor is N83. Substrate is bound by residues W84, R86, R203, and 209-211 (RIS). E222 serves as a coordination point for Mg(2+).

It belongs to the UPP synthase family. As to quaternary structure, homodimer. It depends on Mg(2+) as a cofactor.

Functionally, catalyzes the condensation of isopentenyl diphosphate (IPP) with allylic pyrophosphates generating different type of terpenoids. In Chlorobaculum tepidum (strain ATCC 49652 / DSM 12025 / NBRC 103806 / TLS) (Chlorobium tepidum), this protein is Isoprenyl transferase.